The following is a 546-amino-acid chain: Chaperonin GroEL (546 aa).

ATP contacts are provided by residues 29 to 32 (TLGP), Lys-50, 86 to 90 (DGTTT), Gly-415, and Asp-495. Positions 526 to 546 (EDNAGGGGMPQGMGGGMPGMM) are disordered. Over residues 529–546 (AGGGGMPQGMGGGMPGMM) the composition is skewed to gly residues.

Belongs to the chaperonin (HSP60) family. In terms of assembly, forms a cylinder of 14 subunits composed of two heptameric rings stacked back-to-back. Interacts with the co-chaperonin GroES.

Its subcellular location is the cytoplasm. The enzyme catalyses ATP + H2O + a folded polypeptide = ADP + phosphate + an unfolded polypeptide.. Its function is as follows. Together with its co-chaperonin GroES, plays an essential role in assisting protein folding. The GroEL-GroES system forms a nano-cage that allows encapsulation of the non-native substrate proteins and provides a physical environment optimized to promote and accelerate protein folding. In Christiangramia forsetii (strain DSM 17595 / CGMCC 1.15422 / KT0803) (Gramella forsetii), this protein is Chaperonin GroEL.